Consider the following 123-residue polypeptide: Small ribosomal subunit protein uS12 (123 aa).

Asp-89 bears the 3-methylthioaspartic acid mark.

It belongs to the universal ribosomal protein uS12 family. In terms of assembly, part of the 30S ribosomal subunit. Contacts proteins S8 and S17. May interact with IF1 in the 30S initiation complex.

In terms of biological role, with S4 and S5 plays an important role in translational accuracy. Functionally, interacts with and stabilizes bases of the 16S rRNA that are involved in tRNA selection in the A site and with the mRNA backbone. Located at the interface of the 30S and 50S subunits, it traverses the body of the 30S subunit contacting proteins on the other side and probably holding the rRNA structure together. The combined cluster of proteins S8, S12 and S17 appears to hold together the shoulder and platform of the 30S subunit. The sequence is that of Small ribosomal subunit protein uS12 from Beijerinckia indica subsp. indica (strain ATCC 9039 / DSM 1715 / NCIMB 8712).